Reading from the N-terminus, the 408-residue chain is NADH-quinone oxidoreductase subunit D (408 aa).

It belongs to the complex I 49 kDa subunit family. As to quaternary structure, NDH-1 is composed of 14 different subunits. Subunits NuoB, C, D, E, F, and G constitute the peripheral sector of the complex.

The protein resides in the cell inner membrane. It catalyses the reaction a quinone + NADH + 5 H(+)(in) = a quinol + NAD(+) + 4 H(+)(out). NDH-1 shuttles electrons from NADH, via FMN and iron-sulfur (Fe-S) centers, to quinones in the respiratory chain. The immediate electron acceptor for the enzyme in this species is believed to be ubiquinone. Couples the redox reaction to proton translocation (for every two electrons transferred, four hydrogen ions are translocated across the cytoplasmic membrane), and thus conserves the redox energy in a proton gradient. This is NADH-quinone oxidoreductase subunit D from Wolinella succinogenes (strain ATCC 29543 / DSM 1740 / CCUG 13145 / JCM 31913 / LMG 7466 / NCTC 11488 / FDC 602W) (Vibrio succinogenes).